Consider the following 706-residue polypeptide: Polycomb protein SCMH1 (706 aa).

MBT repeat units lie at residues 28–126 and 134–235; these read FTWD…LQPP and SSWP…LQPP. Disordered stretches follow at residues 233–350 and 576–595; these read QPPG…TVPS and GSDR…RDPS. Basic residues-rich tracts occupy residues 272 to 283 and 304 to 319; these read RGRKPGKKRGRT and FPKK…RKPR. Residues 329-340 show a composition bias toward low complexity; it reads PTTSTPEPDTST. Over residues 576–591 the composition is skewed to basic and acidic residues; that stretch reads GSDRHLESRDPPRLSG. In terms of domain architecture, SAM spans 597 to 662; that stretch reads WTVEDVMQFV…SFHIDRLKQV (66 aa).

Belongs to the SCM family. In terms of assembly, associates with a PRC1-like complex. Interacts with the SAM domain of PHC1 via its SAM domain in vitro. In terms of tissue distribution, most abundant in testis. Moderate levels detected in heart, brain, lung, liver, skeletal muscle and kidney and lower levels in spleen.

The protein resides in the nucleus. Its function is as follows. Associates with Polycomb group (PcG) multiprotein complexes; the complex class is required to maintain the transcriptionally repressive state of some genes. This Mus musculus (Mouse) protein is Polycomb protein SCMH1.